The sequence spans 369 residues: Protein FAM187B (369 aa).

The signal sequence occupies residues 1–17 (MPPMLWLLLHFAAPALG). At 18–335 (FYFSISCPSG…RADSVLKGLK (318 aa)) the chain is on the extracellular side. N-linked (GlcNAc...) asparagine glycosylation is found at Asn-45, Asn-68, and Asn-130. A helical membrane pass occupies residues 336 to 356 (LVLLVVTVLALLGALLKCIHP). The Cytoplasmic segment spans residues 357–369 (SPGRRSTQVLVVK).

Belongs to the FAM187 family.

It localises to the membrane. The sequence is that of Protein FAM187B (FAM187B) from Homo sapiens (Human).